The primary structure comprises 664 residues: Pentatricopeptide repeat-containing protein At1g10910, chloroplastic (664 aa).

The N-terminal 72 residues, 1 to 72 (METPLLVGLE…KRHSNSYLAR (72 aa)), are a transit peptide targeting the chloroplast. PPR repeat units follow at residues 165–199 (NVYI…GLKP), 200–235 (DVVT…GIQM), 236–270 (DSVM…GHSP), 271–305 (NIYH…GLVP), 306–340 (NKVM…GYAE), 341–375 (NEMP…GVRS), 376–406 (DGYA…SETT), 411–445 (DLVM…AVSP), and 446–480 (DYNT…GHRL).

This sequence belongs to the PPR family. P subfamily.

It localises to the plastid. The protein localises to the chloroplast. This is Pentatricopeptide repeat-containing protein At1g10910, chloroplastic from Arabidopsis thaliana (Mouse-ear cress).